Here is a 239-residue protein sequence, read N- to C-terminus: MQRPSGRNPQALRPIRITRRYTKHAEGSVLIEFGDTKVICTASVVAGVPSFLRGQGQGWLTAEYGMLPRSTGTRMDREAARGKQQGRTVEIQRLIGRSLRAAIDLNALGENTIHLDCDVIQADGGTRTASITGAWVALADAVAWLKAEGRVTDEPLKRAIASVSVGIYQGVPVLDLDYPEDSAADTDMNVVMGDDGGIIEIQGTAEAEPFTEAEFAAMLSLAKQGIGQLHQLQQQALSH.

Phosphate contacts are provided by residues R87 and G125–R127.

Belongs to the RNase PH family. In terms of assembly, homohexameric ring arranged as a trimer of dimers.

The catalysed reaction is tRNA(n+1) + phosphate = tRNA(n) + a ribonucleoside 5'-diphosphate. In terms of biological role, phosphorolytic 3'-5' exoribonuclease that plays an important role in tRNA 3'-end maturation. Removes nucleotide residues following the 3'-CCA terminus of tRNAs; can also add nucleotides to the ends of RNA molecules by using nucleoside diphosphates as substrates, but this may not be physiologically important. Probably plays a role in initiation of 16S rRNA degradation (leading to ribosome degradation) during starvation. The sequence is that of Ribonuclease PH from Cellvibrio japonicus (strain Ueda107) (Pseudomonas fluorescens subsp. cellulosa).